The sequence spans 468 residues: Glutamate--tRNA ligase (468 aa).

The 'HIGH' region signature appears at 12–22; the sequence is PSPTGFIHLGN. The 'KMSKS' region motif lies at 244–248; that stretch reads KMSKR. Position 247 (lysine 247) interacts with ATP.

The protein belongs to the class-I aminoacyl-tRNA synthetase family. Glutamate--tRNA ligase type 1 subfamily. Monomer.

The protein localises to the cytoplasm. It carries out the reaction tRNA(Glu) + L-glutamate + ATP = L-glutamyl-tRNA(Glu) + AMP + diphosphate. In terms of biological role, catalyzes the attachment of glutamate to tRNA(Glu) in a two-step reaction: glutamate is first activated by ATP to form Glu-AMP and then transferred to the acceptor end of tRNA(Glu). In Polynucleobacter necessarius subsp. necessarius (strain STIR1), this protein is Glutamate--tRNA ligase.